A 163-amino-acid polypeptide reads, in one-letter code: Peptidyl-prolyl cis-trans isomerase (163 aa).

Residues 5-162 (YFDVSSNGKP…SVLKIEDCGT (158 aa)) form the PPIase cyclophilin-type domain.

This sequence belongs to the cyclophilin-type PPIase family. PPIase A subfamily.

It is found in the cytoplasm. The catalysed reaction is [protein]-peptidylproline (omega=180) = [protein]-peptidylproline (omega=0). Binds cyclosporin A (CsA). CsA mediates some of its effects via an inhibitory action on PPIase. PPIases accelerate the folding of proteins. It catalyzes the cis-trans isomerization of proline imidic peptide bonds in oligopeptides. The protein is Peptidyl-prolyl cis-trans isomerase (PIG28) of Uromyces fabae (Rust fungus).